The primary structure comprises 208 residues: Large ribosomal subunit protein uL3 (208 aa).

A disordered region spans residues glycine 117–alanine 149.

This sequence belongs to the universal ribosomal protein uL3 family. Part of the 50S ribosomal subunit. Forms a cluster with proteins L14 and L19.

One of the primary rRNA binding proteins, it binds directly near the 3'-end of the 23S rRNA, where it nucleates assembly of the 50S subunit. This chain is Large ribosomal subunit protein uL3, found in Exiguobacterium sp. (strain ATCC BAA-1283 / AT1b).